The primary structure comprises 148 residues: Large ribosomal subunit protein bL9 (148 aa).

The protein belongs to the bacterial ribosomal protein bL9 family.

In terms of biological role, binds to the 23S rRNA. This Clostridium beijerinckii (strain ATCC 51743 / NCIMB 8052) (Clostridium acetobutylicum) protein is Large ribosomal subunit protein bL9.